Reading from the N-terminus, the 500-residue chain is NAD(P)H-quinone oxidoreductase chain 4, chloroplastic (500 aa).

A run of 14 helical transmembrane segments spans residues 4–24 (FPWLTIFVGLPISAGFLIFVF), 35–55 (YTIFICVLELLLMTYAFSYYF), 84–104 (GLSLGPILLTGFITTLATLAA), 113–133 (LFHFLMLAMYSGQIGLFSSQN), 134–154 (LLLFFIMWELELIPVYLLLAM), 167–187 (FILYTAGSSVFLLMGALGIAF), 211–231 (ILFYIGFLIAFAVKSPIIPLH), 242–262 (HYSTCMLLAGILLKMGAYGLV), 272–292 (AHSIFSSWLIIVGAIQIIYAA), 305–325 (IAYSSVSHMGFTIIGICSISD), 330–350 (GAILQIISHGFIGAALFFLSG), 386–406 (LALPGMSGFFAELVVFFGIIT), 416–436 (ILITFVTAVGTILTPIYLLSM), and 463–483 (FVSIAILLPVISIGIYPDFVF).

This sequence belongs to the complex I subunit 4 family.

It is found in the plastid. The protein resides in the chloroplast thylakoid membrane. The catalysed reaction is a plastoquinone + NADH + (n+1) H(+)(in) = a plastoquinol + NAD(+) + n H(+)(out). It carries out the reaction a plastoquinone + NADPH + (n+1) H(+)(in) = a plastoquinol + NADP(+) + n H(+)(out). This chain is NAD(P)H-quinone oxidoreductase chain 4, chloroplastic, found in Populus trichocarpa (Western balsam poplar).